Reading from the N-terminus, the 1373-residue chain is DNA-directed RNA polymerase subunit beta (1373 aa).

It belongs to the RNA polymerase beta chain family. In terms of assembly, the RNAP catalytic core consists of 2 alpha, 1 beta, 1 beta' and 1 omega subunit. When a sigma factor is associated with the core the holoenzyme is formed, which can initiate transcription.

The catalysed reaction is RNA(n) + a ribonucleoside 5'-triphosphate = RNA(n+1) + diphosphate. Functionally, DNA-dependent RNA polymerase catalyzes the transcription of DNA into RNA using the four ribonucleoside triphosphates as substrates. The protein is DNA-directed RNA polymerase subunit beta of Rickettsia felis (strain ATCC VR-1525 / URRWXCal2) (Rickettsia azadi).